A 573-amino-acid polypeptide reads, in one-letter code: Putative adenine deaminase PTO1085 (573 aa).

The protein belongs to the metallo-dependent hydrolases superfamily. Adenine deaminase family.

The catalysed reaction is adenine + H2O + H(+) = hypoxanthine + NH4(+). The polypeptide is Putative adenine deaminase PTO1085 (Picrophilus torridus (strain ATCC 700027 / DSM 9790 / JCM 10055 / NBRC 100828 / KAW 2/3)).